The primary structure comprises 125 residues: Large ribosomal subunit protein eL8 (125 aa).

This sequence belongs to the eukaryotic ribosomal protein eL8 family. As to quaternary structure, part of the 50S ribosomal subunit. Probably part of the RNase P complex.

It is found in the cytoplasm. Its function is as follows. Multifunctional RNA-binding protein that recognizes the K-turn motif in ribosomal RNA, the RNA component of RNase P, box H/ACA, box C/D and box C'/D' sRNAs. The protein is Large ribosomal subunit protein eL8 of Nanoarchaeum equitans (strain Kin4-M).